The primary structure comprises 919 residues: UPF0182 protein SUN_1015 (919 aa).

7 consecutive transmembrane segments (helical) span residues 8–28, 51–71, 102–122, 158–178, 207–227, 246–266, and 274–294; these read IIIT…VDYY, ILSF…HIHF, AVAW…GSYA, VYQF…IGVL, LTAF…YNIL, IPAY…LFFY, and VIVS…WIYP.

Belongs to the UPF0182 family.

It localises to the cell membrane. The chain is UPF0182 protein SUN_1015 from Sulfurovum sp. (strain NBC37-1).